A 358-amino-acid polypeptide reads, in one-letter code: Phospho-N-acetylmuramoyl-pentapeptide-transferase (358 aa).

10 consecutive transmembrane segments (helical) span residues arginine 25–isoleucine 45, threonine 73–leucine 93, tyrosine 97–tyrosine 117, methionine 134–methionine 154, tyrosine 172–threonine 192, glycine 197–alanine 217, glycine 233–tryptophan 253, valine 261–isoleucine 281, methionine 286–valine 306, and lysine 335–leucine 355.

It belongs to the glycosyltransferase 4 family. MraY subfamily. It depends on Mg(2+) as a cofactor.

It localises to the cell inner membrane. The catalysed reaction is UDP-N-acetyl-alpha-D-muramoyl-L-alanyl-gamma-D-glutamyl-meso-2,6-diaminopimeloyl-D-alanyl-D-alanine + di-trans,octa-cis-undecaprenyl phosphate = di-trans,octa-cis-undecaprenyl diphospho-N-acetyl-alpha-D-muramoyl-L-alanyl-D-glutamyl-meso-2,6-diaminopimeloyl-D-alanyl-D-alanine + UMP. The protein operates within cell wall biogenesis; peptidoglycan biosynthesis. Its function is as follows. Catalyzes the initial step of the lipid cycle reactions in the biosynthesis of the cell wall peptidoglycan: transfers peptidoglycan precursor phospho-MurNAc-pentapeptide from UDP-MurNAc-pentapeptide onto the lipid carrier undecaprenyl phosphate, yielding undecaprenyl-pyrophosphoryl-MurNAc-pentapeptide, known as lipid I. This is Phospho-N-acetylmuramoyl-pentapeptide-transferase from Geobacter sulfurreducens (strain ATCC 51573 / DSM 12127 / PCA).